We begin with the raw amino-acid sequence, 711 residues long: Ribosomal RNA large subunit methyltransferase K/L (711 aa).

In terms of domain architecture, THUMP spans 43-154; the sequence is LAYRITLWSR…RGQITLGINF (112 aa).

It belongs to the methyltransferase superfamily. RlmKL family.

The protein localises to the cytoplasm. It catalyses the reaction guanosine(2445) in 23S rRNA + S-adenosyl-L-methionine = N(2)-methylguanosine(2445) in 23S rRNA + S-adenosyl-L-homocysteine + H(+). The enzyme catalyses guanosine(2069) in 23S rRNA + S-adenosyl-L-methionine = N(2)-methylguanosine(2069) in 23S rRNA + S-adenosyl-L-homocysteine + H(+). Its function is as follows. Specifically methylates the guanine in position 2445 (m2G2445) and the guanine in position 2069 (m7G2069) of 23S rRNA. This Shewanella loihica (strain ATCC BAA-1088 / PV-4) protein is Ribosomal RNA large subunit methyltransferase K/L.